A 177-amino-acid polypeptide reads, in one-letter code: Neuroblastoma suppressor of tumorigenicity 1 (177 aa).

An N-terminal signal peptide occupies residues 1-16 (MLWFVVGALFPALLLA). 5 disulfides stabilise this stretch: cysteine 34-cysteine 84, cysteine 48-cysteine 98, cysteine 58-cysteine 117, cysteine 62-cysteine 119, and cysteine 81-cysteine 122. The 90-residue stretch at 34–123 (CEAKNITQIV…ILHCSCQACG (90 aa)) folds into the CTCK domain. The interval 143 to 177 (MPAEGPGPHHYAHHQQEVEEPPASSHHHHEEEGDE) is disordered.

It belongs to the DAN family.

Its subcellular location is the secreted. Its function is as follows. May act as a tumor suppressor. This chain is Neuroblastoma suppressor of tumorigenicity 1 (NBL1), found in Gallus gallus (Chicken).